Reading from the N-terminus, the 236-residue chain is Uridylate kinase (236 aa).

12-15 provides a ligand contact to ATP; it reads KLSG. The interval 20-25 is involved in allosteric activation by GTP; sequence GEKGFG. Gly54 is a UMP binding site. ATP-binding residues include Gly55 and Arg59. Residues Asp72 and 133 to 140 contribute to the UMP site; that span reads TGNPYFST. Positions 161, 166, and 169 each coordinate ATP.

Belongs to the UMP kinase family. In terms of assembly, homohexamer.

It is found in the cytoplasm. The catalysed reaction is UMP + ATP = UDP + ADP. Its pathway is pyrimidine metabolism; CTP biosynthesis via de novo pathway; UDP from UMP (UMPK route): step 1/1. Allosterically activated by GTP. Inhibited by UTP. Its function is as follows. Catalyzes the reversible phosphorylation of UMP to UDP. This is Uridylate kinase from Alkaliphilus oremlandii (strain OhILAs) (Clostridium oremlandii (strain OhILAs)).